The sequence spans 125 residues: MKRHILRAKIHRATVTGANLNYEGSISIDERLLEAGKFVVFEKVDIYNVNNGNRFSTYVIPGKPGEISLNGAAARLCMPGDIIIIASYAEVEEEELHHFRPYLVYVDDKNNILEVKRDMEHVFTF.

The active-site Schiff-base intermediate with substrate; via pyruvic acid is S25. S25 bears the Pyruvic acid (Ser) mark. T57 serves as a coordination point for substrate. Y58 functions as the Proton donor in the catalytic mechanism. Residue 71–73 (GAA) participates in substrate binding.

The protein belongs to the PanD family. As to quaternary structure, heterooctamer of four alpha and four beta subunits. The cofactor is pyruvate. Post-translationally, is synthesized initially as an inactive proenzyme, which is activated by self-cleavage at a specific serine bond to produce a beta-subunit with a hydroxyl group at its C-terminus and an alpha-subunit with a pyruvoyl group at its N-terminus.

The protein resides in the cytoplasm. It carries out the reaction L-aspartate + H(+) = beta-alanine + CO2. The protein operates within cofactor biosynthesis; (R)-pantothenate biosynthesis; beta-alanine from L-aspartate: step 1/1. Catalyzes the pyruvoyl-dependent decarboxylation of aspartate to produce beta-alanine. This Hydrogenobaculum sp. (strain Y04AAS1) protein is Aspartate 1-decarboxylase.